Reading from the N-terminus, the 408-residue chain is Innexin-12 (408 aa).

A helical transmembrane segment spans residues 29–49; that stretch reads TIGLVLASAFITGWSFVGSPI. A glycan (N-linked (GlcNAc...) asparagine) is linked at Asn99. 3 helical membrane passes run 113–133, 197–217, and 284–304; these read QWVP…VVIW, VITS…FQFV, and IFVA…TNTI.

This sequence belongs to the pannexin family.

Its subcellular location is the cell membrane. It localises to the cell junction. The protein localises to the gap junction. Structural component of the gap junctions. Plays a role in oocyte directional transit in the spermatheca during ovulation by facilitating the directional propagation of the calcium signal in the spermatheca. Plays a role in male tail tip morphogenesis. This is Innexin-12 from Caenorhabditis elegans.